The chain runs to 219 residues: Protein-L-isoaspartate O-methyltransferase 2 (219 aa).

Serine 66 is an active-site residue.

It belongs to the methyltransferase superfamily. L-isoaspartyl/D-aspartyl protein methyltransferase family.

The protein localises to the cytoplasm. It catalyses the reaction [protein]-L-isoaspartate + S-adenosyl-L-methionine = [protein]-L-isoaspartate alpha-methyl ester + S-adenosyl-L-homocysteine. In terms of biological role, catalyzes the methyl esterification of L-isoaspartyl residues in peptides and proteins that result from spontaneous decomposition of normal L-aspartyl and L-asparaginyl residues. It plays a role in the repair and/or degradation of damaged proteins. In Marinobacter nauticus (strain ATCC 700491 / DSM 11845 / VT8) (Marinobacter aquaeolei), this protein is Protein-L-isoaspartate O-methyltransferase 2.